The chain runs to 2545 residues: Methylphloroacetophenone synthase (2545 aa).

The tract at residues 8–261 (AFGALAPWPA…HVAIHEGIPQ (254 aa)) is N-terminal acylcarrier protein transacylase (SAT) domain. Residues 383 to 798 (KDAIAIIGMG…GSNAAMIVLE (416 aa)) enclose the Ketosynthase family 3 (KS3) domain. Active-site for beta-ketoacyl synthase activity residues include cysteine 547, histidine 682, and histidine 721. The malonyl-CoA:ACP transacylase (MAT) domain stretch occupies residues 914–1218 (LCFGGQVSDR…VSLQLNKPNS (305 aa)). The For acyl/malonyl transferase activity role is filled by serine 1001. The tract at residues 1293–1423 (LPAVLIRLKS…GTVNLKVADD (131 aa)) is N-terminal hotdog fold. A PKS/mFAS DH domain is found at 1293–1605 (LPAVLIRLKS…FTDIRRPVPI (313 aa)). Residues 1296–1604 (VLIRLKSFDS…NFTDIRRPVP (309 aa)) form a product template (PT) domain region. The interval 1449–1605 (RSESLRGNVL…FTDIRRPVPI (157 aa)) is C-terminal hotdog fold. The region spanning 1657–1731 (TSIYEDICGL…SLVDYLHGKG (75 aa)) is the Carrier domain. Serine 1691 is subject to O-(pantetheine 4'-phosphoryl)serine. Residues 1748 to 1768 (SSSHAISTGASSPPDSSGASA) are compositionally biased toward low complexity. A disordered region spans residues 1748-1773 (SSSHAISTGASSPPDSSGASAMTTPP). The interval 1931-2163 (FGASETKLLN…GFKHVSWTDG (233 aa)) is methyltransferase (CMeT) domain. The interval 2198–2544 (AGVPMEEVVW…YDFICRQLGM (347 aa)) is claisen cyclase (CLC) domain. Catalysis depends on for thioesterase activity residues serine 2321, aspartate 2481, and histidine 2513.

Functionally, methylphloroacetophenone synthase; part of the gene cluster that mediates the biosynthesis of usnic acid, a dibenzofuran lichen product possessing a broad spectrum of biological activities. Two genes, mpas and mpao, comprise the usnic acid biosynthetic gene cluster with a single post-PKS enzyme, the methylphloracetophenone oxidase (mpao). The methylphloroacetophenone synthase (mpas) is a non-reducing polyketide synthase that produces methylphloracetophenone from acetate via a methylated tetraketide intermediate. The methylphloroacetophenone oxidase then carries out the oxidative dimerization of methylphloracetophenone to usnic acid. The chain is Methylphloroacetophenone synthase from Cladonia uncialis (Cup lichen).